The sequence spans 63 residues: Bucandin (63 aa).

5 disulfide bridges follow: Cys3–Cys24, Cys6–Cys11, Cys17–Cys39, Cys43–Cys55, and Cys56–Cys61.

In terms of tissue distribution, expressed by the venom gland.

The protein localises to the secreted. This toxin is described as enhancing presynaptic acetylcholine release, but neither experimental results, nor references to other sources are available. This Bungarus candidus (Malayan krait) protein is Bucandin.